A 355-amino-acid chain; its full sequence is MKAEKTSLAVLTAQLTSPDGWQQLLPKGEFRSRDGSPTDVAHWFIDGTIAQNLIHKARQLNQDLLVDYDHETILKAKKGIDAGNVVAAGWFNADEIQWFDDETRQGLYIKPRWTPKAYQQIKDGEFAFLSAVFPYDENGTPLELRMAALTNDPGITGMQRLAVLSATLNPQENVKMPESLRKLLAKLGVEIAEGVELTEEQANTALNALETLQTDKTKADEQVATLSAKNTEVDLSQYVPKATYDAVMSQVAVLSAKTDDVEIDNHISKARNEGRAVEAEVEYLKQFGKQQGVAALSAMLEKRPQIAVLSAQQTQTTKVEKPVEKGTAVLSAADKEAAKLLGISEQDYAKELEAK.

This sequence belongs to the peptidase U35 family.

Functionally, potential protease involved in virion morphogenesis. This chain is Mu-like prophage FluMu I protein, found in Haemophilus influenzae (strain ATCC 51907 / DSM 11121 / KW20 / Rd).